The sequence spans 318 residues: Probable aminopeptidase YbaC (318 aa).

The Nucleophile role is filled by Ser115. Residue Asp266 is part of the active site. His296 acts as the Proton donor in catalysis.

The protein belongs to the peptidase S33 family.

Its function is as follows. Probable aminopeptidase. In Bacillus subtilis (strain 168), this protein is Probable aminopeptidase YbaC (ybaC).